Reading from the N-terminus, the 1372-residue chain is DNA-directed RNA polymerase subunit beta (1372 aa).

It belongs to the RNA polymerase beta chain family. The RNAP catalytic core consists of 2 alpha, 1 beta, 1 beta' and 1 omega subunit. When a sigma factor is associated with the core the holoenzyme is formed, which can initiate transcription.

It carries out the reaction RNA(n) + a ribonucleoside 5'-triphosphate = RNA(n+1) + diphosphate. DNA-dependent RNA polymerase catalyzes the transcription of DNA into RNA using the four ribonucleoside triphosphates as substrates. This is DNA-directed RNA polymerase subunit beta from Rickettsia bellii (strain RML369-C).